A 701-amino-acid chain; its full sequence is DNA ligase (701 aa).

NAD(+) is bound by residues 58–62, 107–108, and E138; these read DYEYD and SL. K140 acts as the N6-AMP-lysine intermediate in catalysis. NAD(+) contacts are provided by R161, E199, K323, and K347. Zn(2+) is bound by residues C441, C444, C459, and C464. Positions 621–701 constitute a BRCT domain; sequence EKRGKLAGLN…EEFLKMIGQQ (81 aa).

Belongs to the NAD-dependent DNA ligase family. LigA subfamily. Requires Mg(2+) as cofactor. It depends on Mn(2+) as a cofactor.

It carries out the reaction NAD(+) + (deoxyribonucleotide)n-3'-hydroxyl + 5'-phospho-(deoxyribonucleotide)m = (deoxyribonucleotide)n+m + AMP + beta-nicotinamide D-nucleotide.. DNA ligase that catalyzes the formation of phosphodiester linkages between 5'-phosphoryl and 3'-hydroxyl groups in double-stranded DNA using NAD as a coenzyme and as the energy source for the reaction. It is essential for DNA replication and repair of damaged DNA. In Sulfurihydrogenibium azorense (strain DSM 15241 / OCM 825 / Az-Fu1), this protein is DNA ligase.